Consider the following 459-residue polypeptide: MMLPSVLQVKRLQPELITPAKPTPQETKFLSEIDDQESLRFQVPVIMCYKANPSLNKNRNPVKVIREALSRALVYYYPLAGRLREGPNKKLVVDCNGEGILFVEASADVTLEQLGDKILPPCPLLEEFLFNFPGSGGIIGCPLLLVQVTCLTCGGFILALRLNHTMCDASGLLLFLTAIAEMARGAHAPSILPVWERELLFARNPPRITCAHHEYEDVIDHSDGSYAFSNQSNMVQRSFYFGAKEMRVLRKQIPPHLISTCSTFDLITACLWKCRTLALKINPKQAVRVSCIVNARGKHHNVRLPLGYYGNAFAYPAAVSKAEPLCKNPLGYALELVKKAKATMNEEYLRSVADLMVLRGRPQYSTTGCYLIVSDNTRAGFGDVNFGWGEPVFAGPAKALDLISFYVQHKNNTEDGILVPMCLSSSAMERFQQELERITQEPKEDICNNLRSTRIMSMM.

Catalysis depends on proton acceptor residues H164 and N385.

This sequence belongs to the plant acyltransferase family. In terms of tissue distribution, expressed at very low levels in the cortex and skin of ripe fruit.

Functionally, involved in the biosynthesis of volatile esters which confer ripe apple fruit flavor. Alcohol acyl transferase that can use a wide range of alcohols as substrate to produce esters. The protein is Alcohol acyl transferase 1 allele GSd of Malus domestica (Apple).